The sequence spans 151 residues: PTITNDGVSIAKEIELEDPYEKIGAELVKEVAKKTDDVAGDGTTTATVLAQALVREGLRNVAAGANPLGLKRGIEKAVEKVTETLLKSAKEVETKEQIAATAGISAGDQSIGDLIAEAMDKVGNEGVITVEESNTFGLQLELTEGMRFDKG.

Position 41–45 (41–45 (DGTTT)) interacts with ATP.

The protein belongs to the chaperonin (HSP60) family. In terms of assembly, forms a cylinder of 14 subunits composed of two heptameric rings stacked back-to-back. Interacts with the co-chaperonin GroES.

Its subcellular location is the cytoplasm. It catalyses the reaction ATP + H2O + a folded polypeptide = ADP + phosphate + an unfolded polypeptide.. Together with its co-chaperonin GroES, plays an essential role in assisting protein folding. The GroEL-GroES system forms a nano-cage that allows encapsulation of the non-native substrate proteins and provides a physical environment optimized to promote and accelerate protein folding. This Mycolicibacterium fortuitum (Mycobacterium fortuitum) protein is Chaperonin GroEL.